The chain runs to 654 residues: tRNA 5-methylaminomethyl-2-thiouridine biosynthesis bifunctional protein MnmC (654 aa).

Positions 1–235 (MSDFQHAQLD…KREMLSGTYQ (235 aa)) are tRNA (mnm(5)s(2)U34)-methyltransferase. The tract at residues 261–654 (VGGGLAGCAS…LRDLVRGQRG (394 aa)) is FAD-dependent cmnm(5)s(2)U34 oxidoreductase.

The protein in the N-terminal section; belongs to the methyltransferase superfamily. tRNA (mnm(5)s(2)U34)-methyltransferase family. It in the C-terminal section; belongs to the DAO family. FAD is required as a cofactor.

It localises to the cytoplasm. The catalysed reaction is 5-aminomethyl-2-thiouridine(34) in tRNA + S-adenosyl-L-methionine = 5-methylaminomethyl-2-thiouridine(34) in tRNA + S-adenosyl-L-homocysteine + H(+). Catalyzes the last two steps in the biosynthesis of 5-methylaminomethyl-2-thiouridine (mnm(5)s(2)U) at the wobble position (U34) in tRNA. Catalyzes the FAD-dependent demodification of cmnm(5)s(2)U34 to nm(5)s(2)U34, followed by the transfer of a methyl group from S-adenosyl-L-methionine to nm(5)s(2)U34, to form mnm(5)s(2)U34. This chain is tRNA 5-methylaminomethyl-2-thiouridine biosynthesis bifunctional protein MnmC, found in Pseudomonas aeruginosa (strain ATCC 15692 / DSM 22644 / CIP 104116 / JCM 14847 / LMG 12228 / 1C / PRS 101 / PAO1).